We begin with the raw amino-acid sequence, 124 residues long: Small ribosomal subunit protein bS6 (124 aa).

The disordered stretch occupies residues Thr-97–Ala-124. Over residues Ala-114 to Ala-124 the composition is skewed to low complexity.

The protein belongs to the bacterial ribosomal protein bS6 family.

Its function is as follows. Binds together with bS18 to 16S ribosomal RNA. In Paraburkholderia phymatum (strain DSM 17167 / CIP 108236 / LMG 21445 / STM815) (Burkholderia phymatum), this protein is Small ribosomal subunit protein bS6.